Reading from the N-terminus, the 287-residue chain is Pol-RFamide neuropeptides (287 aa).

Residues 1–21 (MNLITLLVLGVSTCLIYGIEA) form the signal peptide. A propeptide spanning residues 22–52 (DEKTSSALENEIVEILNGNFKNEKKSIETSD) is cleaved from the precursor. Position 53 is a pyrrolidone carboxylic acid (Gln-53). The residue at position 59 (Phe-59) is a Phenylalanine amide. Positions 62–64 (EVN) are excised as a propeptide. Gln-65 carries the post-translational modification Pyrrolidone carboxylic acid. A Phenylalanine amide modification is found at Phe-71. Positions 74 to 77 (ELSD) are excised as a propeptide. Gln-78 carries the pyrrolidone carboxylic acid modification. Phe-84 bears the Phenylalanine amide mark. Residues 87 to 90 (ELSD) constitute a propeptide that is removed on maturation. The residue at position 91 (Gln-91) is a Pyrrolidone carboxylic acid. Residue Phe-97 is modified to Phenylalanine amide. The propeptide occupies 100–103 (EVLD). Residue Gln-104 is modified to Pyrrolidone carboxylic acid. The residue at position 110 (Phe-110) is a Phenylalanine amide. Residues 113-116 (DASN) constitute a propeptide that is removed on maturation. At Gln-117 the chain carries Pyrrolidone carboxylic acid. Phe-123 is subject to Phenylalanine amide. Residues 126-129 (ELSD) constitute a propeptide that is removed on maturation. Position 130 is a pyrrolidone carboxylic acid (Gln-130). Phenylalanine amide is present on Phe-136. Positions 139-142 (EGSN) are excised as a propeptide. At Gln-143 the chain carries Pyrrolidone carboxylic acid. Phenylalanine amide is present on Phe-149. Positions 152 to 168 (EASKNDLEKQNGRGDSD) are excised as a propeptide. Gln-169 is subject to Pyrrolidone carboxylic acid. A Phenylalanine amide modification is found at Phe-175. Positions 178–181 (EARK) are excised as a propeptide. Residue Gln-182 is modified to Pyrrolidone carboxylic acid. The residue at position 188 (Phe-188) is a Phenylalanine amide. Residues 192-194 (DMN) constitute a propeptide that is removed on maturation. A Pyrrolidone carboxylic acid modification is found at Gln-195. At His-201 the chain carries Histidine amide. Positions 204–207 (ETSD) are excised as a propeptide. Gln-208 carries the post-translational modification Pyrrolidone carboxylic acid. Phenylalanine amide is present on Phe-214. The propeptide occupies 217 to 220 (QLSD). Residue Gln-221 is modified to Pyrrolidone carboxylic acid. Phe-227 carries the post-translational modification Phenylalanine amide. Residues 229–267 (REVKNDKNNPFRSRYTGDSTQLQRENNQPIEELRDNTEK) are disordered. Residues 230-287 (EVKNDKNNPFRSRYTGDSTQLQRENNQPIEELRDNTEKVSIENKPIMKKTSVKISKTV) constitute a propeptide that is removed on maturation. Positions 238–257 (PFRSRYTGDSTQLQRENNQP) are enriched in polar residues.

Belongs to the FARP (FMRFamide related peptide) family. Post-translationally, the N-terminal processing sites of the Pol-RFamide peptides are acidic suggesting that cniderian nervous systems may use a variety of unconventional processing procedures.

The protein resides in the secreted. Its function is as follows. Has direct action on motoneurons, and effect includes transient inhibition followed by prolonged excitation. The polypeptide is Pol-RFamide neuropeptides (Polyorchis penicillatus (Hydromedusa)).